A 49-amino-acid chain; its full sequence is Metallothionein (49 aa).

The beta stretch occupies residues 1 to 16 (SCAGSCKCKNCRCRSC). 17 residues coordinate a divalent metal cation: cysteine 2, cysteine 6, cysteine 8, cysteine 11, cysteine 13, cysteine 16, cysteine 20, cysteine 21, cysteine 23, cysteine 24, cysteine 28, cysteine 31, cysteine 35, cysteine 37, cysteine 45, cysteine 47, and cysteine 48. The segment at 17-49 (RKSCCSCCPAGCNNCAKGCVCKEPASSKCSCCH) is alpha.

The protein belongs to the metallothionein superfamily. Type 1 family.

Its function is as follows. Metallothioneins have a high content of cysteine residues that bind various heavy metals. This chain is Metallothionein, found in Phasianus colchicus colchicus (Black-necked pheasant).